The sequence spans 545 residues: CTP synthase (545 aa).

An amidoligase domain region spans residues 1–266 (MTTRYIFVTG…DDLVTKRFGL (266 aa)). CTP is bound at residue serine 14. Serine 14 lines the UTP pocket. ATP is bound by residues 15 to 20 (SLGKGI) and aspartate 72. Residues aspartate 72 and glutamate 140 each contribute to the Mg(2+) site. Residues 147–149 (DIE), 187–192 (KTKPTQ), and lysine 223 contribute to the CTP site. UTP is bound by residues 187–192 (KTKPTQ) and lysine 223. 239-241 (KDV) contacts ATP. The 252-residue stretch at 291-542 (TIGMVGKYTE…VAAAVAYQKR (252 aa)) folds into the Glutamine amidotransferase type-1 domain. Position 352 (glycine 352) interacts with L-glutamine. Cysteine 379 acts as the Nucleophile; for glutamine hydrolysis in catalysis. Residues 380–383 (LGMQ), glutamate 403, and arginine 470 each bind L-glutamine. Residues histidine 515 and glutamate 517 contribute to the active site.

This sequence belongs to the CTP synthase family. In terms of assembly, homotetramer.

The catalysed reaction is UTP + L-glutamine + ATP + H2O = CTP + L-glutamate + ADP + phosphate + 2 H(+). It carries out the reaction L-glutamine + H2O = L-glutamate + NH4(+). The enzyme catalyses UTP + NH4(+) + ATP = CTP + ADP + phosphate + 2 H(+). It functions in the pathway pyrimidine metabolism; CTP biosynthesis via de novo pathway; CTP from UDP: step 2/2. Its activity is regulated as follows. Allosterically activated by GTP, when glutamine is the substrate; GTP has no effect on the reaction when ammonia is the substrate. The allosteric effector GTP functions by stabilizing the protein conformation that binds the tetrahedral intermediate(s) formed during glutamine hydrolysis. Inhibited by the product CTP, via allosteric rather than competitive inhibition. Its function is as follows. Catalyzes the ATP-dependent amination of UTP to CTP with either L-glutamine or ammonia as the source of nitrogen. Regulates intracellular CTP levels through interactions with the four ribonucleotide triphosphates. This chain is CTP synthase, found in Shewanella loihica (strain ATCC BAA-1088 / PV-4).